Here is an 822-residue protein sequence, read N- to C-terminus: Valine--tRNA ligase (822 aa).

The short motif at 41-51 (PNVTGQLHLGH) is the 'HIGH' region element. The 'KMSKS' region signature appears at 511 to 515 (KMSKS). Position 514 (lysine 514) interacts with ATP. Residues 765–822 (EQKGRELKEIQFLKSEILRAEKILTNKGFLEKAPREKIDLERTKLEKLKEKLVFYEKK) adopt a coiled-coil conformation.

This sequence belongs to the class-I aminoacyl-tRNA synthetase family. ValS type 1 subfamily. As to quaternary structure, monomer.

It localises to the cytoplasm. It carries out the reaction tRNA(Val) + L-valine + ATP = L-valyl-tRNA(Val) + AMP + diphosphate. Catalyzes the attachment of valine to tRNA(Val). As ValRS can inadvertently accommodate and process structurally similar amino acids such as threonine, to avoid such errors, it has a 'posttransfer' editing activity that hydrolyzes mischarged Thr-tRNA(Val) in a tRNA-dependent manner. This Mesomycoplasma hyopneumoniae (strain J / ATCC 25934 / NCTC 10110) (Mycoplasma hyopneumoniae) protein is Valine--tRNA ligase.